A 305-amino-acid chain; its full sequence is D-alanine--D-alanine ligase (305 aa).

Residues 99–300 form the ATP-grasp domain; it reads KLFFEKAGIR…YEEMIQTFVN (202 aa). 126–181 is a binding site for ATP; it reads NFTGTYPVVVKPNQEGSTIGLTVAETEEELLQGIEEAFRHDDTILIEEFIAGTEVT.

It belongs to the D-alanine--D-alanine ligase family.

It is found in the cytoplasm. The enzyme catalyses 2 D-alanine + ATP = D-alanyl-D-alanine + ADP + phosphate + H(+). It participates in cell wall biogenesis; peptidoglycan biosynthesis. Its function is as follows. Cell wall formation. The sequence is that of D-alanine--D-alanine ligase from Halalkalibacterium halodurans (strain ATCC BAA-125 / DSM 18197 / FERM 7344 / JCM 9153 / C-125) (Bacillus halodurans).